A 63-amino-acid polypeptide reads, in one-letter code: Large ribosomal subunit protein bL28 (63 aa).

It belongs to the bacterial ribosomal protein bL28 family.

The sequence is that of Large ribosomal subunit protein bL28 from Geotalea daltonii (strain DSM 22248 / JCM 15807 / FRC-32) (Geobacter daltonii).